The sequence spans 292 residues: 4-diphosphocytidyl-2-C-methyl-D-erythritol kinase (292 aa).

The active site involves lysine 10. 94 to 104 (PVAAGLAGGSS) serves as a coordination point for ATP. The active site involves aspartate 136.

It belongs to the GHMP kinase family. IspE subfamily.

The catalysed reaction is 4-CDP-2-C-methyl-D-erythritol + ATP = 4-CDP-2-C-methyl-D-erythritol 2-phosphate + ADP + H(+). It participates in isoprenoid biosynthesis; isopentenyl diphosphate biosynthesis via DXP pathway; isopentenyl diphosphate from 1-deoxy-D-xylulose 5-phosphate: step 3/6. In terms of biological role, catalyzes the phosphorylation of the position 2 hydroxy group of 4-diphosphocytidyl-2C-methyl-D-erythritol. This chain is 4-diphosphocytidyl-2-C-methyl-D-erythritol kinase, found in Brevibacillus brevis (strain 47 / JCM 6285 / NBRC 100599).